We begin with the raw amino-acid sequence, 435 residues long: Matrix extracellular phosphoglycoprotein (435 aa).

The first 16 residues, 1-16 (MQAVSVGLFLFSMTWA), serve as a signal peptide directing secretion. N-linked (GlcNAc...) asparagine glycosylation is present at asparagine 71. Disordered stretches follow at residues 124–145 (LLQNSPGQSKHTPRARRSTHYL) and 166–435 (LLVR…SSGD). The dentonin stretch occupies residues 164–186 (PDLLVRGDNDVPPFSGDGQHFMH). A Cell attachment site motif is present at residues 169–171 (RGD). Serine 178 carries an O-linked (Xyl...) (chondroitin sulfate) serine glycan. 2 stretches are compositionally biased toward basic and acidic residues: residues 267-278 (KFRELPGKEGNR) and 300-313 (SKEKVKGGSREHTG). Positions 337 to 346 (GNQVTLTESQ) are enriched in polar residues. 2 stretches are compositionally biased toward basic residues: residues 382–391 (AHRRTSHPTR) and 405–415 (RRPHPHRRVST). The tract at residues 418-435 (RDSSESSSSGSSSESSGD) is ASARM motif; interaction with PHEX. Over residues 422 to 435 (ESSSSGSSSESSGD) the composition is skewed to low complexity.

Belongs to the PF07175/osteoregulin family. Interacts (via ASARM motif) with PHEX; the interaction is zinc-dependent. In terms of processing, phosphorylated on serine residues in the ASARM motif; the phosphorylation is important for the inhibition of bone mineralization. Cleaved by CTSB/cathepsin B; the cleavage is blocked by metalloprotease PHEX. As to expression, expressed in osteoblasts and osteocytes.

It is found in the secreted. The protein localises to the extracellular space. The protein resides in the extracellular matrix. In terms of biological role, regulates renal phosphate excretion. Regulates bone mineralization by osteoblasts and cartilage mineralization by chondrocytes. Regulates the mineralization of the extracellular matrix of the craniofacial complex, such as teeth, bone and cartilage. Increases dental pulp stem cell proliferation. This is Matrix extracellular phosphoglycoprotein from Rattus norvegicus (Rat).